Consider the following 310-residue polypeptide: Homoserine O-acetyltransferase (310 aa).

Cys142 serves as the catalytic Acyl-thioester intermediate. Residues Lys163 and Ser192 each coordinate substrate. His235 (proton acceptor) is an active-site residue. Glu237 is a catalytic residue. Arg249 contacts substrate.

It belongs to the MetA family.

The protein resides in the cytoplasm. It catalyses the reaction L-homoserine + acetyl-CoA = O-acetyl-L-homoserine + CoA. The protein operates within amino-acid biosynthesis; L-methionine biosynthesis via de novo pathway; O-acetyl-L-homoserine from L-homoserine: step 1/1. In terms of biological role, transfers an acetyl group from acetyl-CoA to L-homoserine, forming acetyl-L-homoserine. This Agathobacter rectalis (strain ATCC 33656 / DSM 3377 / JCM 17463 / KCTC 5835 / VPI 0990) (Eubacterium rectale) protein is Homoserine O-acetyltransferase.